Reading from the N-terminus, the 68-residue chain is uncharacterized protein (68 aa).

The segment at M1–K20 is disordered. The chain crosses the membrane as a helical span at residues I27 to F44.

Its subcellular location is the membrane. This is an uncharacterized protein from Dictyostelium discoideum (Social amoeba).